The chain runs to 136 residues: Small ribosomal subunit protein uS19 (136 aa).

The protein belongs to the universal ribosomal protein uS19 family.

Functionally, protein S19 forms a complex with S13 that binds strongly to the 16S ribosomal RNA. The protein is Small ribosomal subunit protein uS19 (rps19) of Methanothermobacter thermautotrophicus (strain ATCC 29096 / DSM 1053 / JCM 10044 / NBRC 100330 / Delta H) (Methanobacterium thermoautotrophicum).